The sequence spans 242 residues: Mannosyl-3-phosphoglycerate phosphatase (242 aa).

Aspartate 8 (nucleophile) is an active-site residue. Residues aspartate 8, aspartate 10, serine 169, and aspartate 204 each coordinate Mg(2+).

It belongs to the HAD-like hydrolase superfamily. MPGP family. Mg(2+) serves as cofactor.

It localises to the cytoplasm. It catalyses the reaction 2-O-(alpha-D-mannosyl)-3-phosphoglycerate + H2O = (2R)-2-O-(alpha-D-mannosyl)-glycerate + phosphate. The protein operates within carbohydrate biosynthesis; 2-(alpha-D-mannosyl)-D-glycerate biosynthesis; 2-(alpha-D-mannosyl)-D-glycerate from GDP-alpha-D-mannose (MPG route): step 2/2. In terms of biological role, hydrolyzes mannosyl-3-phosphoglycerate (MPG) to form the osmolyte mannosylglycerate (MG). The chain is Mannosyl-3-phosphoglycerate phosphatase from Pyrococcus furiosus (strain ATCC 43587 / DSM 3638 / JCM 8422 / Vc1).